The following is a 73-amino-acid chain: Beta-defensin 50 (73 aa).

The N-terminal stretch at 1 to 23 (MKTLHLLLLISGLLSVFVKGVGS) is a signal peptide. 2 disulfides stabilise this stretch: cysteine 34–cysteine 63 and cysteine 46–cysteine 64.

This sequence belongs to the beta-defensin family.

It localises to the secreted. Its function is as follows. Has bactericidal activity. The chain is Beta-defensin 50 (Defb50) from Rattus norvegicus (Rat).